The chain runs to 260 residues: Proline-rich protein 33 (260 aa).

Positions 29–132 (GVQTVSPRPE…KVAPKPSRSG (104 aa)) are disordered. Over residues 73-83 (GPSPYSPPPAA) the composition is skewed to pro residues.

This chain is Proline-rich protein 33 (Prr33), found in Mus musculus (Mouse).